Consider the following 391-residue polypeptide: Elongation factor Tu 1 (391 aa).

In terms of domain architecture, tr-type G spans 10-201 (KPHVNIGTIG…AVDSYIPTPE (192 aa)). The tract at residues 19 to 26 (GHVDHGKT) is G1. 19–26 (GHVDHGKT) lines the GTP pocket. T26 contacts Mg(2+). The interval 55–59 (GITIS) is G2. The segment at 76–79 (DCPG) is G3. Residues 76–80 (DCPGH) and 131–134 (NKVD) contribute to the GTP site. Residues 131-134 (NKVD) are G4. The interval 169 to 171 (SAL) is G5.

It belongs to the TRAFAC class translation factor GTPase superfamily. Classic translation factor GTPase family. EF-Tu/EF-1A subfamily. As to quaternary structure, monomer.

The protein localises to the cytoplasm. It catalyses the reaction GTP + H2O = GDP + phosphate + H(+). GTP hydrolase that promotes the GTP-dependent binding of aminoacyl-tRNA to the A-site of ribosomes during protein biosynthesis. This chain is Elongation factor Tu 1, found in Rhizobium etli (strain ATCC 51251 / DSM 11541 / JCM 21823 / NBRC 15573 / CFN 42).